A 201-amino-acid chain; its full sequence is Alanine--tRNA ligase (201 aa).

Belongs to the class-II aminoacyl-tRNA synthetase family. The cofactor is Zn(2+).

It localises to the cytoplasm. The catalysed reaction is tRNA(Ala) + L-alanine + ATP = L-alanyl-tRNA(Ala) + AMP + diphosphate. Catalyzes the attachment of alanine to tRNA(Ala) in a two-step reaction: alanine is first activated by ATP to form Ala-AMP and then transferred to the acceptor end of tRNA(Ala). Also edits incorrectly charged Ser-tRNA(Ala) and Gly-tRNA(Ala) via its editing domain. This is Alanine--tRNA ligase (alaS) from Rhizobium leguminosarum bv. viciae.